The sequence spans 146 residues: UPF0735 ACT domain-containing protein Cphy_3604 (146 aa).

The region spanning 70-145 (TFMLQMDDIP…GIHYLKILGR (76 aa)) is the ACT domain.

This sequence belongs to the UPF0735 family.

In Lachnoclostridium phytofermentans (strain ATCC 700394 / DSM 18823 / ISDg) (Clostridium phytofermentans), this protein is UPF0735 ACT domain-containing protein Cphy_3604.